The following is a 538-amino-acid chain: Natural resistance-associated macrophage protein 1 (538 aa).

The disordered stretch occupies residues 1 to 36 (MTGDTDPPKQSRTQYGSISSSPSPGPPQVPPGGTYL). Over 1–54 (MTGDTDPPKQSRTQYGSISSSPSPGPPQVPPGGTYLSEKIPIPNAEPGTFSLRK) the chain is Cytoplasmic. The helical transmembrane segment at 55–75 (LWAFTGPGFLMSIAYLDPGNI) threads the bilayer. Residues 76 to 81 (QSDLQA) are Extracellular-facing. Residues 82 to 102 (GAVAGFKLLWVLLWATVLGLL) traverse the membrane as a helical segment. Residues 103–139 (CQRLAARLGVVTGKDLGEICHLYYPKVPRTLLWLNME) lie on the Cytoplasmic side of the membrane. The chain crosses the membrane as a helical span at residues 140–160 (LAIVGSDMQEVIGTAIAFNLL). Residues 161–164 (SAGR) lie on the Extracellular side of the membrane. Residues 165-185 (IPLWGGVLITVVDTFFFLYLN) form a helical membrane-spanning segment. Residues 186-193 (NYGLRKLE) lie on the Cytoplasmic side of the membrane. A helical membrane pass occupies residues 194-214 (AFFAFLIAIMAFTFGYEYVVA). At 215 to 240 (RPAQGALLRGLFLPSCSGCGQPELLQ) the chain is on the extracellular side. The helical transmembrane segment at 241 to 261 (AVGIVGAIIMPHNIYLHSALV) threads the bilayer. Residues 262 to 286 (KSREVDRTRREDIREANMYFLIEST) are Cytoplasmic-facing. Residues 287–307 (IALFVSFFINLFVMAVFGQAF) traverse the membrane as a helical segment. At 308–346 (YQQTNQAAFNICANSSLHDYAKIFPRNNLTVAVDFYQGG) the chain is on the extracellular side. Asn-321 and Asn-335 each carry an N-linked (GlcNAc...) asparagine glycan. Residues 347-367 (VILGCLFGPAALYIWAVGLLA) traverse the membrane as a helical segment. Residues 368–394 (AGQSSTMTGTYAGQFVMEGFLKLRWSR) lie on the Cytoplasmic side of the membrane. The helical transmembrane segment at 395–415 (FARLLLTRSCAILPALLVAVF) threads the bilayer. The Extracellular segment spans residues 416 to 432 (KELQDLSSLNDLLNVLQ). Residues 433–453 (SLLLPFAVLPILTFTSMPALM) traverse the membrane as a helical segment. At 454-468 (QEFASGRVNKVITSS) the chain is on the cytoplasmic side. The helical transmembrane segment at 469–489 (IMLLVCAINFYFLVSYLPSLP) threads the bilayer. Over 490–492 (HPA) the chain is Extracellular. Residues 493–513 (YFGLVALLAVIYLGLTTYLVW) form a helical membrane-spanning segment. At 514–538 (TCLIAHGATLLVHSSHQHFLYGLLE) the chain is on the cytoplasmic side.

This sequence belongs to the NRAMP family.

The protein resides in the late endosome membrane. It localises to the lysosome membrane. The catalysed reaction is Zn(2+)(in) + H(+)(out) = Zn(2+)(out) + H(+)(in). It carries out the reaction Fe(2+)(in) + H(+)(out) = Fe(2+)(out) + H(+)(in). The enzyme catalyses Mn(2+)(in) + H(+)(out) = Mn(2+)(out) + H(+)(in). Functionally, macrophage-specific antiporter that fluxes metal ions in either direction against a proton gradient. Localized to late endosomal lysosomal membranes, delivers bivalent cations from the cytosol into these acidic compartments where they may directly affect antimicrobial activity. Involved in iron metabolism and host natural resistance to infection with intracellular parasites. Pathogen resistance involves sequestration of Fe(2+) and Mn(2+), cofactors of both prokaryotic and eukaryotic catalases and superoxide dismutases, not only to protect the macrophage against its own generation of reactive oxygen species, but to deny the cations to the pathogen for synthesis of its protective enzymes. This is Natural resistance-associated macrophage protein 1 (SLC11A1) from Sus scrofa (Pig).